The chain runs to 386 residues: Succinate--CoA ligase [ADP-forming] subunit beta (386 aa).

One can recognise an ATP-grasp domain in the interval 9-244 (KDLLTAYQLP…PSQENIRDVL (236 aa)). ATP-binding positions include Lys46, 53 to 55 (GRG), Val102, and Glu107. Mg(2+) contacts are provided by Asn199 and Asp213. Substrate-binding positions include Asn264 and 321–323 (GIM).

It belongs to the succinate/malate CoA ligase beta subunit family. In terms of assembly, heterotetramer of two alpha and two beta subunits. Requires Mg(2+) as cofactor.

It catalyses the reaction succinate + ATP + CoA = succinyl-CoA + ADP + phosphate. The enzyme catalyses GTP + succinate + CoA = succinyl-CoA + GDP + phosphate. The protein operates within carbohydrate metabolism; tricarboxylic acid cycle; succinate from succinyl-CoA (ligase route): step 1/1. Succinyl-CoA synthetase functions in the citric acid cycle (TCA), coupling the hydrolysis of succinyl-CoA to the synthesis of either ATP or GTP and thus represents the only step of substrate-level phosphorylation in the TCA. The beta subunit provides nucleotide specificity of the enzyme and binds the substrate succinate, while the binding sites for coenzyme A and phosphate are found in the alpha subunit. The chain is Succinate--CoA ligase [ADP-forming] subunit beta from Chlamydia trachomatis serovar L2 (strain ATCC VR-902B / DSM 19102 / 434/Bu).